The sequence spans 807 residues: DNA gyrase subunit B (807 aa).

Residues 429 to 543 (SELFIVEGDS…KGYLYIAQPP (115 aa)) enclose the Toprim domain. The Mg(2+) site is built by Glu435, Asp508, and Asp510.

Belongs to the type II topoisomerase GyrB family. Heterotetramer, composed of two GyrA and two GyrB chains. In the heterotetramer, GyrA contains the active site tyrosine that forms a transient covalent intermediate with DNA, while GyrB binds cofactors and catalyzes ATP hydrolysis. Requires Mg(2+) as cofactor. Mn(2+) is required as a cofactor. Ca(2+) serves as cofactor.

It is found in the cytoplasm. The enzyme catalyses ATP-dependent breakage, passage and rejoining of double-stranded DNA.. A type II topoisomerase that negatively supercoils closed circular double-stranded (ds) DNA in an ATP-dependent manner to modulate DNA topology and maintain chromosomes in an underwound state. Negative supercoiling favors strand separation, and DNA replication, transcription, recombination and repair, all of which involve strand separation. Also able to catalyze the interconversion of other topological isomers of dsDNA rings, including catenanes and knotted rings. Type II topoisomerases break and join 2 DNA strands simultaneously in an ATP-dependent manner. The protein is DNA gyrase subunit B of Rickettsia conorii (strain ATCC VR-613 / Malish 7).